The primary structure comprises 248 residues: Small ribosomal subunit protein uS2 (248 aa).

It belongs to the universal ribosomal protein uS2 family.

The polypeptide is Small ribosomal subunit protein uS2 (Janthinobacterium sp. (strain Marseille) (Minibacterium massiliensis)).